The chain runs to 751 residues: MAFRTICVLVGVFICSICVKGSSQPQARVYLTFDELRETKTSEYFSLSHHPLDYRILLMDEDQDRIYVGSKDHILSLNINNISQEPLSVFWPASTIKVEECKMAGKDPTHGCGNFVRVIQTFNRTHLYVCGSGAFSPVCTYLNRGRRSEDQVFMIDSKCESGKGRCSFNPNVNTVSVMINEELFSGMYIDFMGTDAAIFRSLTKRNAVRTDQHNSKWLSEPMFVDAHVIPDGTDPNDAKVYFFFKEKLTDNNRSTKQIHSMIARICPNDTGGLRSLVNKWTTFLKARLVCSVTDEDGPETHFDELEDVFLLETDNPRTTLVYGIFTTSSSVFKGSAVCVYHLSDIQTVFNGPFAHKEGPNHQLISYQGRIPYPRPGTCPGGAFTPNMRTTKEFPDDVVTFIRNHPLMYNSIYPVHKRPLIVRIGTDYKYTKIAVDRVNAADGRYHVLFLGTDRGTVQKVVVLPTNSSVSGELILEELEVFKNHAPITTMKISSKKQQLYVSSNEGVSQVSLHRCHIYGTACADCCLARDPYCAWDGHSCSRFYPTGKRRSRRQDVRHGNPLTQCRGFNLKAYRNAAEIVQYGVKNNTTFLECAPKSPQASIKWLLQKDKDRRKEVKLNERIIATSQGLLIRSVQGSDQGLYHCIATENSFKQTIAKINFKVLDSEMVAVVTDKWSPWTWASSVRALPFHPKDIMGAFSHSEMQMINQYCKDTRQQHQQGDESQKMRGDYGKLKALINSRKSRNRRNQLPES.

The signal sequence occupies residues 1-21 (MAFRTICVLVGVFICSICVKG). The 484-residue stretch at 28 to 511 (RVYLTFDELR…SNEGVSQVSL (484 aa)) folds into the Sema domain. N-linked (GlcNAc...) asparagine glycosylation occurs at N81. C101 and C112 form a disulfide bridge. An N-linked (GlcNAc...) asparagine glycan is attached at N123. C130 and C139 are disulfide-bonded. Residues N252 and N268 are each glycosylated (N-linked (GlcNAc...) asparagine). 2 cysteine pairs are disulfide-bonded: C266-C378 and C290-C338. The N-linked (GlcNAc...) asparagine glycan is linked to N465. Cysteines 514 and 532 form a disulfide. The region spanning 571–655 (AYRNAAEIVQ…TENSFKQTIA (85 aa)) is the Ig-like C2-type domain. N585 and N586 each carry an N-linked (GlcNAc...) asparagine glycan. An intrachain disulfide couples C592 to C643. Positions 712–731 (TRQQHQQGDESQKMRGDYGK) are enriched in basic and acidic residues. The disordered stretch occupies residues 712-751 (TRQQHQQGDESQKMRGDYGKLKALINSRKSRNRRNQLPES).

The protein belongs to the semaphorin family. As to quaternary structure, interacts with PLXND1.

The protein localises to the secreted. Binds to plexin family members and plays an important role in the regulation of developmental processes. Required for normal cardiovascular development during embryogenesis. Functions as attractant for growing axons, and thereby plays an important role in axon growth and axon guidance. In Pongo abelii (Sumatran orangutan), this protein is Semaphorin-3C (SEMA3C).